Here is a 461-residue protein sequence, read N- to C-terminus: Divalent metal cation transporter MntH (461 aa).

11 consecutive transmembrane segments (helical) span residues 56 to 76, 89 to 109, 132 to 152, 160 to 180, 193 to 213, 230 to 250, 285 to 305, 322 to 342, 378 to 398, 399 to 419, and 433 to 453; these read AMAF…PGNW, TLLA…SLCA, AMVL…AEVI, LIFG…VFLI, ALVI…LALA, IVTN…TVMP, IALM…AATF, LLAP…ALLC, AIAI…GTGQ, LLIL…FPLV, and SPLW…ALNV.

Belongs to the NRAMP family.

The protein localises to the cell inner membrane. In terms of biological role, h(+)-stimulated, divalent metal cation uptake system. This is Divalent metal cation transporter MntH from Agrobacterium fabrum (strain C58 / ATCC 33970) (Agrobacterium tumefaciens (strain C58)).